Reading from the N-terminus, the 314-residue chain is Methionyl-tRNA formyltransferase (314 aa).

Ser-113–Pro-116 is a (6S)-5,6,7,8-tetrahydrofolate binding site.

It belongs to the Fmt family.

The enzyme catalyses L-methionyl-tRNA(fMet) + (6R)-10-formyltetrahydrofolate = N-formyl-L-methionyl-tRNA(fMet) + (6S)-5,6,7,8-tetrahydrofolate + H(+). Its function is as follows. Attaches a formyl group to the free amino group of methionyl-tRNA(fMet). The formyl group appears to play a dual role in the initiator identity of N-formylmethionyl-tRNA by promoting its recognition by IF2 and preventing the misappropriation of this tRNA by the elongation apparatus. This chain is Methionyl-tRNA formyltransferase, found in Photobacterium profundum (strain SS9).